Reading from the N-terminus, the 50-residue chain is Penaeidin-1 (50 aa).

3 disulfides stabilise this stretch: Cys25–Cys38, Cys27–Cys45, and Cys39–Cys46.

As to expression, higher expression in hemocytes and to a lesser extent in heart, testis, gills, intestine, lymphoid organ and hepatopancreas. Traces in eyes and subcuticular epithelium. Not present in the brain.

It is found in the cytoplasmic granule. Functionally, antibacterial activity against M.luteus and E.coli bacteria. Antifungal activity against N.crassa and F.oxysporum. Presents chitin-binding activity. The protein is Penaeidin-1 of Penaeus vannamei (Whiteleg shrimp).